The following is a 689-amino-acid chain: Protein asunder (689 aa).

Residues 521–550 (NGARLKLSKAKDQYRLLYRELEQLIQLNAT) adopt a coiled-coil conformation. The interval 578-619 (GASLLRSYTESPLSPERLEPITSGSASGSSNSNSLLKASKRR) is disordered. A compositionally biased stretch (low complexity) spans 600 to 614 (SGSASGSSNSNSLLK). The short motif at 613–619 (LKASKRR) is the Nuclear localization signal (NLS) element.

It belongs to the Integrator subunit 13 family. As to quaternary structure, belongs to the multiprotein complex Integrator, at least composed of IntS1, IntS2, IntS3, IntS4, omd/IntS5, IntS6, defl/IntS7, IntS8, IntS9, IntS10, IntS11, IntS12, asun/IntS13, IntS14 and IntS15. The core complex associates with protein phosphatase 2A subunits mts/PP2A and Pp2A-29B, to form the Integrator-PP2A (INTAC) complex. In terms of processing, phosphorylated.

It is found in the nucleus. It localises to the cytoplasm. The protein resides in the perinuclear region. Functionally, component of the integrator complex, a multiprotein complex that terminates RNA polymerase II (Pol II) transcription in the promoter-proximal region of genes. The integrator complex provides a quality checkpoint during transcription elongation by driving premature transcription termination of transcripts that are unfavorably configured for transcriptional elongation: the complex terminates transcription by (1) catalyzing dephosphorylation of the C-terminal domain (CTD) of Pol II subunit Polr2A/Rbp1 and Spt5, and (2) degrading the exiting nascent RNA transcript via endonuclease activity. The integrator complex is also involved in the 3'-end processing of the U7 snRNA, and also the spliceosomal snRNAs U1, U2, U4 and U5. The protein is Protein asunder (asun) of Drosophila erecta (Fruit fly).